The following is a 277-amino-acid chain: Bis(5'-nucleosyl)-tetraphosphatase, symmetrical (277 aa).

It belongs to the Ap4A hydrolase family.

The enzyme catalyses P(1),P(4)-bis(5'-adenosyl) tetraphosphate + H2O = 2 ADP + 2 H(+). Functionally, hydrolyzes diadenosine 5',5'''-P1,P4-tetraphosphate to yield ADP. The chain is Bis(5'-nucleosyl)-tetraphosphatase, symmetrical from Bordetella pertussis (strain Tohama I / ATCC BAA-589 / NCTC 13251).